The following is a 187-amino-acid chain: Plasmodium-specific hydrophobic abundant protein (187 aa).

The N-terminal stretch at methionine 1–alanine 18 is a signal peptide.

This sequence to HAP-S protein.

The protein resides in the membrane. The polypeptide is Plasmodium-specific hydrophobic abundant protein (Physarum polycephalum (Slime mold)).